We begin with the raw amino-acid sequence, 117 residues long: Large ribosomal subunit protein bL20c (117 aa).

It belongs to the bacterial ribosomal protein bL20 family.

It localises to the plastid. The protein localises to the chloroplast. Binds directly to 23S ribosomal RNA and is necessary for the in vitro assembly process of the 50S ribosomal subunit. It is not involved in the protein synthesizing functions of that subunit. The polypeptide is Large ribosomal subunit protein bL20c (Morus indica (Mulberry)).